The sequence spans 406 residues: chitinase-like effector (406 aa).

The first 23 residues, 1 to 23, serve as a signal peptide directing secretion; it reads MLTLLPSLILLLSTLSLSTPANA. A GH18 domain is found at 26 to 405; that stretch reads AIAKAYYPGW…DAVRHGAGFK (380 aa). Positions 138 and 384 each coordinate chitin.

The protein belongs to the glycosyl hydrolase 18 family.

Its subcellular location is the secreted. Its function is as follows. Catalytically impaired chitinase that binds efficiently to chitin, but not to chitosan, xylan, or cellulose. Despite the lack of chitinolytic activity, retains substrate binding specificity and acts as an effector to prevent chitin-triggered immunity by sequestering immunogenic chitin fragments. The protein is chitinase-like effector (Chi) of Moniliophthora roreri (Frosty pod rot fungus).